Reading from the N-terminus, the 129-residue chain is DNA-directed RNA polymerase subunit omega (129 aa).

A disordered region spans residues 77 to 98 (VDEPESEVVPALSSAPQNPEAI).

The protein belongs to the RNA polymerase subunit omega family. As to quaternary structure, the RNAP catalytic core consists of 2 alpha, 1 beta, 1 beta' and 1 omega subunit. When a sigma factor is associated with the core the holoenzyme is formed, which can initiate transcription.

It catalyses the reaction RNA(n) + a ribonucleoside 5'-triphosphate = RNA(n+1) + diphosphate. Its function is as follows. Promotes RNA polymerase assembly. Latches the N- and C-terminal regions of the beta' subunit thereby facilitating its interaction with the beta and alpha subunits. The polypeptide is DNA-directed RNA polymerase subunit omega (Methylocella silvestris (strain DSM 15510 / CIP 108128 / LMG 27833 / NCIMB 13906 / BL2)).